A 228-amino-acid chain; its full sequence is Lipoprotein-releasing system ATP-binding protein LolD (228 aa).

Positions 9 to 228 constitute an ABC transporter domain; that stretch reads LEAHDIQKNF…ELINGCLYRR (220 aa). Residue 44-51 coordinates ATP; the sequence is GRSGEGKS.

This sequence belongs to the ABC transporter superfamily. Lipoprotein translocase (TC 3.A.1.125) family. As to quaternary structure, the complex is composed of two ATP-binding proteins (LolD) and two transmembrane proteins (LolC and LolE).

The protein localises to the cell inner membrane. Part of the ABC transporter complex LolCDE involved in the translocation of mature outer membrane-directed lipoproteins, from the inner membrane to the periplasmic chaperone, LolA. Responsible for the formation of the LolA-lipoprotein complex in an ATP-dependent manner. This chain is Lipoprotein-releasing system ATP-binding protein LolD, found in Protochlamydia amoebophila (strain UWE25).